The primary structure comprises 202 residues: Precorrin-2 dehydrogenase (202 aa).

NAD(+) is bound by residues 20 to 21 (TI) and 41 to 42 (PT).

The protein belongs to the precorrin-2 dehydrogenase / sirohydrochlorin ferrochelatase family. As to quaternary structure, homodimer.

It carries out the reaction precorrin-2 + NAD(+) = sirohydrochlorin + NADH + 2 H(+). The protein operates within cofactor biosynthesis; adenosylcobalamin biosynthesis; sirohydrochlorin from precorrin-2: step 1/1. Its pathway is porphyrin-containing compound metabolism; siroheme biosynthesis; sirohydrochlorin from precorrin-2: step 1/1. In terms of biological role, catalyzes the dehydrogenation of precorrin-2 to form sirohydrochlorin which is used as a precursor in both siroheme biosynthesis and in the anaerobic branch of adenosylcobalamin biosynthesis. It is unable to oxidize precorrin-3. The chain is Precorrin-2 dehydrogenase (sirC) from Priestia megaterium (Bacillus megaterium).